We begin with the raw amino-acid sequence, 252 residues long: Serine/threonine phosphatase stp (252 aa).

A compositionally biased stretch (basic and acidic residues) spans 1 to 18 (MHAEFRTDRGRIRHHNED). Residues 1-23 (MHAEFRTDRGRIRHHNEDNGGVF) form a disordered region. The 241-residue stretch at 2–242 (HAEFRTDRGR…DNITVLLVER (241 aa)) folds into the PPM-type phosphatase domain. Residues aspartate 36, glycine 37, aspartate 194, and aspartate 233 each contribute to the Mn(2+) site.

The protein belongs to the PP2C family. Mn(2+) is required as a cofactor.

It is found in the cytoplasm. Its subcellular location is the membrane. The catalysed reaction is O-phospho-L-seryl-[protein] + H2O = L-seryl-[protein] + phosphate. It carries out the reaction O-phospho-L-threonyl-[protein] + H2O = L-threonyl-[protein] + phosphate. Protein phosphatase that dephosphorylates EF-Tu. The polypeptide is Serine/threonine phosphatase stp (stp) (Listeria monocytogenes serotype 4b (strain F2365)).